Consider the following 332-residue polypeptide: Cell growth regulator with RING finger domain protein 1 (332 aa).

An RING-type zinc finger spans residues Cys274–Arg309.

Ubiquitously expressed with high expression in testis and the cerebellum.

It localises to the nucleus. Its subcellular location is the endoplasmic reticulum. Functionally, able to inhibit growth in several cell lines. The polypeptide is Cell growth regulator with RING finger domain protein 1 (CGRRF1) (Homo sapiens (Human)).